The following is a 42-amino-acid chain: Photosystem I reaction center subunit IX (42 aa).

The helical transmembrane segment at 7–27 threads the bilayer; that stretch reads YLSTAPVLATLWFGFLAGLLI.

Belongs to the PsaJ family.

Its subcellular location is the plastid. It localises to the chloroplast thylakoid membrane. Its function is as follows. May help in the organization of the PsaE and PsaF subunits. The protein is Photosystem I reaction center subunit IX of Huperzia lucidula (Shining clubmoss).